Consider the following 366-residue polypeptide: Alanine racemase (366 aa).

The active-site Proton acceptor; specific for D-alanine is the Lys-40. Position 40 is an N6-(pyridoxal phosphate)lysine (Lys-40). Residue Arg-136 coordinates substrate. The Proton acceptor; specific for L-alanine role is filled by Tyr-263. Met-310 contacts substrate.

Belongs to the alanine racemase family. Pyridoxal 5'-phosphate is required as a cofactor.

It catalyses the reaction L-alanine = D-alanine. It participates in amino-acid biosynthesis; D-alanine biosynthesis; D-alanine from L-alanine: step 1/1. Functionally, catalyzes the interconversion of L-alanine and D-alanine. May also act on other amino acids. This is Alanine racemase (alr) from Streptococcus pyogenes serotype M28 (strain MGAS6180).